The primary structure comprises 166 residues: Regulatory protein RecX (166 aa).

It belongs to the RecX family.

Its subcellular location is the cytoplasm. Functionally, modulates RecA activity. The protein is Regulatory protein RecX of Escherichia coli O7:K1 (strain IAI39 / ExPEC).